Reading from the N-terminus, the 366-residue chain is Acetylserotonin O-methyltransferase 2 (366 aa).

S-adenosyl-L-homocysteine-binding residues include Gly-209, Asp-232, Asp-253, and Lys-267. The active-site Proton acceptor is His-271. Active-site residues include Glu-302 and Glu-332.

Belongs to the class I-like SAM-binding methyltransferase superfamily. Cation-independent O-methyltransferase family. In terms of assembly, homodimer. In terms of tissue distribution, expressed in roots, leaves, stems and flowers.

Its subcellular location is the cytoplasm. The enzyme catalyses N-acetylserotonin + S-adenosyl-L-methionine = melatonin + S-adenosyl-L-homocysteine + H(+). It participates in aromatic compound metabolism; melatonin biosynthesis; melatonin from serotonin: step 1/2. Functionally, methyltransferase which catalyzes the transfer of a methyl group onto N-acetylserotonin, producing melatonin (N-acetyl-5-methoxytryptamine). The sequence is that of Acetylserotonin O-methyltransferase 2 from Oryza sativa subsp. japonica (Rice).